Here is a 41-residue protein sequence, read N- to C-terminus: Urotensin-1 (41 aa).

Residue Val41 is modified to Valine amide.

This sequence belongs to the sauvagine/corticotropin-releasing factor/urotensin I family.

It localises to the secreted. Functionally, urotensin is found in the teleost caudal neurosecretory system. It has a suggested role in osmoregulation and as a corticotropin-releasing factor. The polypeptide is Urotensin-1 (Catostomus commersonii (White sucker)).